The chain runs to 206 residues: MTFVFDHPLIKDKLTRMRKIQTESTKFRDNLKEITQLMAYEVTKDLELDRIEIETPITKMLGYKLKEKIVLIPILRAGLGMVDGLKELIPTASIGHIGIYRDEETAQPKEYYCKMPANLTNGNAIILDPMLATGGSASKAIEIIKTYRPKTISFICLVAAPEGLKEIEKNHPDINIYVAALDEKLNEKYYIVPGLGDAGDRIFGTK.

5-phospho-alpha-D-ribose 1-diphosphate is bound by residues Arg-76, Arg-101, and 128–136 (DPMLATGGS). Residues Ile-191 and 196-198 (GDA) contribute to the uracil site. Residue Asp-197 participates in 5-phospho-alpha-D-ribose 1-diphosphate binding.

This sequence belongs to the UPRTase family. Mg(2+) is required as a cofactor.

It catalyses the reaction UMP + diphosphate = 5-phospho-alpha-D-ribose 1-diphosphate + uracil. It participates in pyrimidine metabolism; UMP biosynthesis via salvage pathway; UMP from uracil: step 1/1. Allosterically activated by GTP. Functionally, catalyzes the conversion of uracil and 5-phospho-alpha-D-ribose 1-diphosphate (PRPP) to UMP and diphosphate. This is Uracil phosphoribosyltransferase from Malacoplasma penetrans (strain HF-2) (Mycoplasma penetrans).